Here is a 150-residue protein sequence, read N- to C-terminus: MKVVLLKDVAGLGIRGQVVKVAEGYGRNYLIPKGLAEEATPGRIKELARLDQAREERVERLAAQARKVAAGLKGLTVRIPARAGEGGKLFGSVGNKDIAAALAARHNLKIDRKKLELKEPIRSLGKFPVLARLHPGVQVEFEVEVVDNGT.

The protein belongs to the bacterial ribosomal protein bL9 family.

Binds to the 23S rRNA. The polypeptide is Large ribosomal subunit protein bL9 (Desulforudis audaxviator (strain MP104C)).